Here is a 246-residue protein sequence, read N- to C-terminus: tRNA pseudouridine synthase A (246 aa).

D53 acts as the Nucleophile in catalysis. Residue Y111 coordinates substrate.

The protein belongs to the tRNA pseudouridine synthase TruA family. As to quaternary structure, homodimer.

It carries out the reaction uridine(38/39/40) in tRNA = pseudouridine(38/39/40) in tRNA. Formation of pseudouridine at positions 38, 39 and 40 in the anticodon stem and loop of transfer RNAs. This is tRNA pseudouridine synthase A from Anoxybacillus flavithermus (strain DSM 21510 / WK1).